We begin with the raw amino-acid sequence, 178 residues long: Dual-action ribosomal maturation protein DarP (178 aa).

Positions 1 to 14 (MTVSDHPQTVSQPD) are enriched in polar residues. Residues 1–25 (MTVSDHPQTVSQPDPESESRPSKTR) are disordered.

Belongs to the DarP family.

It is found in the cytoplasm. In terms of biological role, member of a network of 50S ribosomal subunit biogenesis factors which assembles along the 30S-50S interface, preventing incorrect 23S rRNA structures from forming. Promotes peptidyl transferase center (PTC) maturation. The protein is Dual-action ribosomal maturation protein DarP of Nitrosomonas europaea (strain ATCC 19718 / CIP 103999 / KCTC 2705 / NBRC 14298).